The primary structure comprises 156 residues: Glutaredoxin-2, mitochondrial (156 aa).

The transit peptide at 1–19 directs the protein to the mitochondrion; sequence MSWRRAASVGRRLVASGRI. The Glutaredoxin domain occupies 50 to 150; that stretch reads VNQIQETISN…PLVHQCYLKK (101 aa). Cysteine 61 is a [2Fe-2S] cluster binding site. Residue lysine 67 coordinates glutathione. Cysteine 70 is subject to S-glutathionyl cysteine; alternate. Cysteine 70 and cysteine 73 are oxidised to a cystine. Glutathione-binding residues include glutamine 102 and valine 114. Cysteine 146 contacts [2Fe-2S] cluster.

Belongs to the glutaredoxin family. As to quaternary structure, monomer; active form. Homodimer; inactive form. The homodimer is probably linked by 1 2Fe-2S cluster. As to expression, widely expressed. Highly expressed in testis, and at much lower level in kidney and brain.

The protein resides in the mitochondrion. It localises to the nucleus. With respect to regulation, the 2Fe-2S present in the homodimer leads to inactivation of the enzyme. The 2Fe-2S may serve as a redox sensor: the presence of one-electron oxidants or reductants leading to the loss of the 2Fe-2S cluster, subsequent monomerization and activation of the enzyme. In terms of biological role, glutathione-dependent oxidoreductase that facilitates the maintenance of mitochondrial redox homeostasis upon induction of apoptosis by oxidative stress. Involved in response to hydrogen peroxide and regulation of apoptosis caused by oxidative stress. Acts as a very efficient catalyst of monothiol reactions because of its high affinity for protein glutathione-mixed disulfides. Can receive electrons not only from glutathione (GSH), but also from thioredoxin reductase supporting both monothiol and dithiol reactions. Efficiently catalyzes both glutathionylation and deglutathionylation of mitochondrial complex I, which in turn regulates the superoxide production by the complex. Overexpression decreases the susceptibility to apoptosis and prevents loss of cardiolipin and cytochrome c release. In Mus musculus (Mouse), this protein is Glutaredoxin-2, mitochondrial (Glrx2).